Reading from the N-terminus, the 152-residue chain is ARL14 effector protein-like (152 aa).

The span at 1–16 shows a compositional bias: polar residues; sequence MTEPSQKNNSTQQELT. Residues 1 to 27 form a disordered region; that stretch reads MTEPSQKNNSTQQELTNHLFPEKSSQI.

The sequence is that of ARL14 effector protein-like (Arl14epl) from Mus musculus (Mouse).